Consider the following 349-residue polypeptide: Green-sensitive opsin-3 (349 aa).

At 1-36 (MNGTEGNNFYIPMSNRTGLVRSPYEYPQYYLAEPWQ) the chain is on the extracellular side. N-linked (GlcNAc...) asparagine glycans are attached at residues N2 and N15. A helical membrane pass occupies residues 37-61 (FKLLAVYMFFLMCFGFPINGLTLVV). At 62–73 (TAQHKKLRQPLN) the chain is on the cytoplasmic side. Residues 74 to 99 (FILVNLAVAGTIMVCFGFTVTFYTAI) traverse the membrane as a helical segment. At 100–113 (NGYFVLGPTGCAIE) the chain is on the extracellular side. An intrachain disulfide couples C110 to C187. A helical membrane pass occupies residues 114 to 133 (GFMATLGGQISLWSLVVLAI). The Cytoplasmic segment spans residues 134–152 (ERYIVVCKPMGSFKFSSNH). The helical transmembrane segment at 153 to 176 (AFAGIGFTWIMALSCAAPPLVGWS) threads the bilayer. Topologically, residues 177-202 (RYIPEGMQCSCGPDYYTLNPDYNNES) are extracellular. A glycan (N-linked (GlcNAc...) asparagine) is linked at N200. Residues 203–230 (YVLYMFCCHFIFPVTTIFFTYGRLVCTV) form a helical membrane-spanning segment. The Cytoplasmic segment spans residues 231–252 (KAAAAQQQESESTQKAEREVTR). Residues 253–276 (MVILMVLGFLVAWTPYASVAAWIF) traverse the membrane as a helical segment. Topologically, residues 277–284 (FNRGAAFS) are extracellular. The helical transmembrane segment at 285 to 309 (AQFMAVPAFFSKSSSIFNPIIYVLL) threads the bilayer. K296 bears the N6-(retinylidene)lysine mark. The Cytoplasmic portion of the chain corresponds to 310-349 (NKQFRNCMLTTLFCGKNPLGDDESSTVSTSKTEVSSVSPA). The disordered stretch occupies residues 329 to 349 (GDDESSTVSTSKTEVSSVSPA). Residues 334–349 (STVSTSKTEVSSVSPA) show a composition bias toward low complexity.

It belongs to the G-protein coupled receptor 1 family. Opsin subfamily. Phosphorylated on some or all of the serine and threonine residues present in the C-terminal region.

The protein resides in the membrane. Visual pigments are the light-absorbing molecules that mediate vision. They consist of an apoprotein, opsin, covalently linked to cis-retinal. The chain is Green-sensitive opsin-3 (opn1mw3) from Danio rerio (Zebrafish).